The sequence spans 601 residues: Glutathione-regulated potassium-efflux system protein KefB (601 aa).

The next 13 helical transmembrane spans lie at 4–24 (ADLL…VPLA), 29–49 (IGAV…GLGF), 55–75 (EILH…GLEL), 87–107 (IFGV…GLLM), 111–131 (FLWQ…TAMA), 152–172 (VLLF…LLAG), 177–197 (HFDW…LIGG), 207–227 (FIAA…LVLS), 230–250 (LFMD…GVLL), 262–282 (AIDP…GMSL), 284–304 (LGVL…LVVI), 324–344 (MQFA…FSTA), and 356–376 (ALLL…MKGI). In terms of domain architecture, RCK N-terminal spans 400-519 (KPQVIVVGFG…AGVTQFSRET (120 aa)).

Belongs to the monovalent cation:proton antiporter 2 (CPA2) transporter (TC 2.A.37) family. KefB subfamily. Interacts with the regulatory subunit KefG.

It is found in the cell inner membrane. Pore-forming subunit of a potassium efflux system that confers protection against electrophiles. Catalyzes K(+)/H(+) antiport. The polypeptide is Glutathione-regulated potassium-efflux system protein KefB (Salmonella dublin (strain CT_02021853)).